The primary structure comprises 170 residues: Co-chaperone protein HscB homolog (170 aa).

The 75-residue stretch at Asp-5–Gly-79 folds into the J domain.

The protein belongs to the HscB family. As to quaternary structure, interacts with HscA and stimulates its ATPase activity.

Co-chaperone involved in the maturation of iron-sulfur cluster-containing proteins. Seems to help targeting proteins to be folded toward HscA. This Bordetella petrii (strain ATCC BAA-461 / DSM 12804 / CCUG 43448) protein is Co-chaperone protein HscB homolog.